We begin with the raw amino-acid sequence, 341 residues long: 1-aminocyclopropane-1-carboxylate deaminase (341 aa).

Ser1 carries the post-translational modification N-acetylserine. The residue at position 51 (Lys51) is an N6-(pyridoxal phosphate)lysine. Ser78 functions as the Nucleophile in the catalytic mechanism.

It belongs to the ACC deaminase/D-cysteine desulfhydrase family. Homodimer. Pyridoxal 5'-phosphate serves as cofactor.

It carries out the reaction 1-aminocyclopropane-1-carboxylate + H2O = 2-oxobutanoate + NH4(+). In terms of biological role, catalyzes a cyclopropane ring-opening reaction, the irreversible conversion of 1-aminocyclopropane-1-carboxylate (ACC) to ammonia and alpha-ketobutyrate. This is 1-aminocyclopropane-1-carboxylate deaminase from Cyberlindnera saturnus (Yeast).